The sequence spans 152 residues: MNFREERYDTIMFTDSHCPRVVADFFYEVESRFTTASSKVDGRLIGANPSGEGEDDEDVDDTSERVIDLVHANGFISVPYDLKSYKAQLKSYLKAIKERLQKTVPDKLPLLESQVNKYRKDVFANFDQYECFTGPSTNPEAMVVLMNFVCGR.

Residues 1 to 152 (MNFREERYDT…VVLMNFVCGR (152 aa)) enclose the TCTP domain.

The protein belongs to the TCTP family.

It is found in the cytoplasm. In terms of biological role, involved in calcium binding and microtubule stabilization. This chain is Translationally-controlled tumor protein homolog (TCTP), found in Schistosoma haematobium (Blood fluke).